Reading from the N-terminus, the 1086-residue chain is NAD(P) transhydrogenase, mitochondrial (1086 aa).

A mitochondrion-targeting transit peptide spans 1–43; the sequence is MANLLKTVVTGCSCPLLSNLGSCKGLRVKKDFLRTFYTHQELW. Residues 44-474 are Mitochondrial matrix-facing; it reads CKAPVKPGIP…TITPFRKTMS (431 aa). Lys70 is modified (N6-acetyllysine). Position 117 is an N6-succinyllysine (Lys117). 182-184 is a binding site for NAD(+); the sequence is RVT. At Lys224 the chain carries N6-succinyllysine. NAD(+)-binding positions include Val237, 257–259, and Gly287; that span reads DTR. The residue at position 294 (Lys294) is an N6-succinyllysine. The NAD(+) site is built by Glu300 and Leu319. The residue at position 331 (Lys331) is an N6-succinyllysine. Lys397 bears the N6-acetyllysine mark. Helical transmembrane passes span 475 to 493, 501 to 521, 527 to 546, and 558 to 578; these read TASA…GIAA, MVTT…GVTP, LMSV…LALM, and GLAA…FLVT. At 579-595 the chain is on the mitochondrial matrix side; the sequence is QRMLDMFKRPTDPPEYN. The next 5 membrane-spanning stretches (helical) occupy residues 596–616, 622–642, 646–666, 672–691, and 702–722; these read YLYL…LYSG, IMYL…STQG, LGNA…LGVL, LLAQ…LTIA, and LVAA…IAEY. The Cytoplasmic portion of the chain corresponds to 723–739; sequence IIEYPHFATDAAANLTK. 5 consecutive transmembrane segments (helical) span residues 740–760, 778–797, 801–819, 833–853, and 857–879; these read IVAY…LIAY, HLLN…PFMV, FTTG…AVMG, VVIT…GFLL, and LLTI…MCVA. The Mitochondrial matrix segment spans residues 880 to 1086; sequence MNRSLANVIL…QAKVRESYQK (207 aa). Residues Tyr933, 965 to 970, 1007 to 1011, 1026 to 1027, 1042 to 1049, and 1068 to 1069 contribute to the NADP(+) site; these read VAGRMP, GANDT, GM, KRSLGVGY, and DA. Position 1079 is an N6-succinyllysine (Lys1079).

This sequence in the N-terminal section; belongs to the AlaDH/PNT family. The protein in the C-terminal section; belongs to the PNT beta subunit family. As to quaternary structure, homodimer. Widely expressed with expression most readily detectable in adrenal, heart, kidney, thyroid and adipose tissues.

The protein localises to the mitochondrion inner membrane. The catalysed reaction is NAD(+) + NADPH + H(+)(in) = NADH + NADP(+) + H(+)(out). Functionally, the transhydrogenation between NADH and NADP is coupled to respiration and ATP hydrolysis and functions as a proton pump across the membrane. May play a role in reactive oxygen species (ROS) detoxification in the adrenal gland. This is NAD(P) transhydrogenase, mitochondrial (NNT) from Homo sapiens (Human).